We begin with the raw amino-acid sequence, 62 residues long: Photosystem II reaction center protein Z (62 aa).

A run of 2 helical transmembrane segments spans residues 8–28 (AVFALIATSSILLIGVPVVFA) and 41–61 (FSGTSLWIGLVFLVGILNSLI).

The protein belongs to the PsbZ family. PSII is composed of 1 copy each of membrane proteins PsbA, PsbB, PsbC, PsbD, PsbE, PsbF, PsbH, PsbI, PsbJ, PsbK, PsbL, PsbM, PsbT, PsbY, PsbZ, Psb30/Ycf12, at least 3 peripheral proteins of the oxygen-evolving complex and a large number of cofactors. It forms dimeric complexes.

The protein localises to the plastid. It is found in the chloroplast thylakoid membrane. In terms of biological role, may control the interaction of photosystem II (PSII) cores with the light-harvesting antenna, regulates electron flow through the 2 photosystem reaction centers. PSII is a light-driven water plastoquinone oxidoreductase, using light energy to abstract electrons from H(2)O, generating a proton gradient subsequently used for ATP formation. The polypeptide is Photosystem II reaction center protein Z (Daucus carota (Wild carrot)).